The following is a 369-amino-acid chain: tRNA/tmRNA (uracil-C(5))-methyltransferase (369 aa).

S-adenosyl-L-methionine is bound by residues Q190, Y218, N223, E239, and D301. Residue C326 is the Nucleophile of the active site. Residue E360 is the Proton acceptor of the active site.

Belongs to the class I-like SAM-binding methyltransferase superfamily. RNA M5U methyltransferase family. TrmA subfamily.

The enzyme catalyses uridine(54) in tRNA + S-adenosyl-L-methionine = 5-methyluridine(54) in tRNA + S-adenosyl-L-homocysteine + H(+). It carries out the reaction uridine(341) in tmRNA + S-adenosyl-L-methionine = 5-methyluridine(341) in tmRNA + S-adenosyl-L-homocysteine + H(+). Dual-specificity methyltransferase that catalyzes the formation of 5-methyluridine at position 54 (m5U54) in all tRNAs, and that of position 341 (m5U341) in tmRNA (transfer-mRNA). This is tRNA/tmRNA (uracil-C(5))-methyltransferase from Vibrio cholerae serotype O1 (strain ATCC 39541 / Classical Ogawa 395 / O395).